Reading from the N-terminus, the 121-residue chain is Small ribosomal subunit protein uS13 (121 aa).

Positions 90–121 are disordered; the sequence is RHRHGLPVRGQHTKNNARTRKGKAVAIAGKKK.

Belongs to the universal ribosomal protein uS13 family. Part of the 30S ribosomal subunit. Forms a loose heterodimer with protein S19. Forms two bridges to the 50S subunit in the 70S ribosome.

In terms of biological role, located at the top of the head of the 30S subunit, it contacts several helices of the 16S rRNA. In the 70S ribosome it contacts the 23S rRNA (bridge B1a) and protein L5 of the 50S subunit (bridge B1b), connecting the 2 subunits; these bridges are implicated in subunit movement. Contacts the tRNAs in the A and P-sites. The protein is Small ribosomal subunit protein uS13 of Limosilactobacillus fermentum (strain NBRC 3956 / LMG 18251) (Lactobacillus fermentum).